A 478-amino-acid polypeptide reads, in one-letter code: F-box protein YDR306C (478 aa).

The span at 1-14 (MANKSRPKKIKAPY) shows a compositional bias: basic residues. Disordered stretches follow at residues 1–32 (MANKSRPKKIKAPYRKYVAGEGFSSTRNDNKA) and 67–101 (RLSNEKKDKKGRKQSPSSSSTSSSKGEKNGKVIES). The span at 80-90 (QSPSSSSTSSS) shows a compositional bias: low complexity. Residues 91–101 (KGEKNGKVIES) show a composition bias toward basic and acidic residues. The 62-residue stretch at 112–173 (KMVLPWEIQH…CLPKLYYAPA (62 aa)) folds into the F-box domain.

Interacts with SKP1. Component of the probable SCF(YDR306C) complex containing CDC53, SKP1, RBX1 and YDR306C. Autoubiquitinated by the E3 ubiquitin ligase complex in conjunction with the E2 enzyme CDC34.

It functions in the pathway protein modification; protein ubiquitination. Functionally, substrate recognition component of a SCF (SKP1-CUL1-F-box protein) E3 ubiquitin-protein ligase complex which mediates the ubiquitination and subsequent proteasomal degradation of target proteins. Probably recognizes and binds to phosphorylated target proteins. The polypeptide is F-box protein YDR306C (Saccharomyces cerevisiae (strain ATCC 204508 / S288c) (Baker's yeast)).